A 583-amino-acid chain; its full sequence is CD166 antigen (583 aa).

The N-terminal stretch at 1-27 (MASKAAPSCRLVFCLLISATVLRPGLG) is a signal peptide. 2 Ig-like V-type domains span residues 28-120 (WYTV…TEDD) and 125-234 (PTVV…KTVY). At 28–527 (WYTVNSAYGD…NKEKVNDQAK (500 aa)) the chain is on the extracellular side. 2 cysteine pairs are disulfide-bonded: cysteine 43–cysteine 113 and cysteine 157–cysteine 220. N-linked (GlcNAc...) asparagine glycosylation is found at asparagine 91, asparagine 95, asparagine 167, asparagine 265, asparagine 306, asparagine 361, asparagine 457, asparagine 480, and asparagine 499. Ig-like C2-type domains follow at residues 245 to 328 (PTEQ…AAIT), 333 to 409 (DLSL…ESLT), and 416 to 501 (PQIK…LNVS). 3 cysteine pairs are disulfide-bonded: cysteine 270/cysteine 313, cysteine 354/cysteine 392, and cysteine 435/cysteine 485. Residues 528–549 (LIVGIVVGLLLAALVAGVVYWL) form a helical membrane-spanning segment. Residues 550 to 583 (YMKKSKTASKHVNKDLGNMEENKKLEENNHKTEA) are Cytoplasmic-facing. Positions 562–583 (NKDLGNMEENKKLEENNHKTEA) are disordered. Residues 569–583 (EENKKLEENNHKTEA) show a composition bias toward basic and acidic residues.

Homodimer. Interacts (via extracellular domain) with CD6 (via extracellular domain). Homodimerization and interaction with CD6 involve the same region and cannot occur simultaneously. The affinity for CD6 is much higher than the affinity for self-association. Interacts (via glycosylated extracellular domain) with LGALS1 and LGALS3. Interaction with LGALS1 or LGALS3 inhibits interaction with CD6. Glycosylated. As to expression, constitutively expressed in the autonomic nervous system. Sympathetic and parasympathetic nerve fibers but not myelinated nerve fibers in the spinal nerve.

Its subcellular location is the cell membrane. The protein localises to the cell projection. It is found in the axon. The protein resides in the dendrite. Functionally, cell adhesion molecule that mediates both heterotypic cell-cell contacts via its interaction with CD6, as well as homotypic cell-cell contacts. Promotes T-cell activation and proliferation via its interactions with CD6. Contributes to the formation and maturation of the immunological synapse via its interactions with CD6. Mediates homotypic interactions with cells that express ALCAM. Mediates attachment of dendritic cells onto endothelial cells via homotypic interaction. Inhibits endothelial cell migration and promotes endothelial tube formation via homotypic interactions. Required for normal organization of the lymph vessel network. Required for normal hematopoietic stem cell engraftment in the bone marrow. Plays a role in hematopoiesis; required for normal numbers of hematopoietic stem cells in bone marrow. Promotes in vitro osteoblast proliferation and differentiation. Promotes neurite extension, axon growth and axon guidance; axons grow preferentially on surfaces that contain ALCAM. Mediates outgrowth and pathfinding for retinal ganglion cell axons. The protein is CD166 antigen (ALCAM) of Bos taurus (Bovine).